The primary structure comprises 206 residues: Glutathione S-transferase class-mu 28 kDa isozyme (206 aa).

A GST N-terminal domain is found at 1-81 (VKLIYFNGRG…FIARKHNMMG (81 aa)). Residues Y5, 5–6 (YF), R11, 36–40 (WPKIK), L48, 50–51 (IV), and 65–66 (ES) contribute to the glutathione site. The GST C-terminal domain maps to 83-206 (TDDEYYIIEK…YLSERHATAF (124 aa)).

This sequence belongs to the GST superfamily. Mu family. In terms of assembly, homodimer.

The enzyme catalyses RX + glutathione = an S-substituted glutathione + a halide anion + H(+). Conjugation of reduced glutathione to a wide number of exogenous and endogenous hydrophobic electrophiles. Its function is as follows. GST isoenzymes appear to play a central role in the parasite detoxification system. Other functions are also suspected including a role in increasing the solubility of haematin in the parasite gut. This Schistosoma japonicum (Blood fluke) protein is Glutathione S-transferase class-mu 28 kDa isozyme.